A 340-amino-acid chain; its full sequence is MAASSSEISEMKGVEESPKVPGEGPGHSEAETGPPQVLAGVPDQPEAPQPGPNTTAAPVDSGPKAGLAPETTETPAGASETAQATDLSLSPGGESKANCSPEDPCQETVSKPEVSKEATADQGSRLESAAPPEPAPEPAPQPDPRPDSQPTPKPALQPELPTQEDPTPEILSESVGEKQENGAVVPLQAGDGEEGPAPEPHSPPSKKSPPANGAPPRVLQQLVEEDRMRRAHSGHPGSPRGSLSRHPSSQLAGPGVEGGEGTQKPRDYIILAILSCFCPMWPVNIVAFAYAVMSRNSLQQGDVDGAQRLGRVAKLLSIVALVGGVLIIIASCVINLGVYK.

The segment at 1–261 (MAASSSEISE…AGPGVEGGEG (261 aa)) is disordered. At 1-268 (MAASSSEISE…GEGTQKPRDY (268 aa)) the chain is on the cytoplasmic side. The segment covering 9–18 (SEMKGVEESP) has biased composition (basic and acidic residues). Position 28 is a phosphoserine (S28). T74 bears the Phosphothreonine mark. Pro residues-rich tracts occupy residues 131–155 (PPEP…PKPA) and 197–207 (APEPHSPPSKK). Position 238 is a phosphoserine (S238). R240 is modified (omega-N-methylarginine). 2 positions are modified to phosphoserine: S248 and S249. Positions 269 to 289 (IILAILSCFCPMWPVNIVAFA) form an intramembrane region, helical. Residues 290–317 (YAVMSRNSLQQGDVDGAQRLGRVAKLLS) are Cytoplasmic-facing. The helical transmembrane segment at 318 to 338 (IVALVGGVLIIIASCVINLGV) threads the bilayer. The Extracellular segment spans residues 339-340 (YK).

Belongs to the CD225/Dispanin family. As to quaternary structure, component of the outer core of AMPAR complex. AMPAR complex consists of an inner core made of 4 pore-forming GluA/GRIA proteins (GRIA1, GRIA2, GRIA3 and GRIA4) and 4 major auxiliary subunits arranged in a twofold symmetry. One of the two pairs of distinct binding sites is occupied either by CNIH2, CNIH3 or CACNG2, CACNG3. The other harbors CACNG2, CACNG3, CACNG4, CACNG8 or GSG1L. This inner core of AMPAR complex is complemented by outer core constituents binding directly to the GluA/GRIA proteins at sites distinct from the interaction sites of the inner core constituents. Outer core constituents include at least PRRT1, PRRT2, CKAMP44/SHISA9, FRRS1L and NRN1. The proteins of the inner and outer core serve as a platform for other, more peripherally associated AMPAR constituents. Alone or in combination, these auxiliary subunits control the gating and pharmacology of the AMPAR complex and profoundly impact their biogenesis and protein processing. Interacts with intersectin 1/ITSN1. Interacts with SNARE complex components, including SNAP25, STX1A, SYT1 and SYT2; this interaction may inhibit SNARE complex formation.

It is found in the cell membrane. The protein resides in the presynaptic cell membrane. The protein localises to the synapse. It localises to the cell projection. Its subcellular location is the axon. It is found in the cytoplasmic vesicle. The protein resides in the secretory vesicle. The protein localises to the synaptic vesicle membrane. It localises to the postsynaptic density membrane. Its subcellular location is the dendritic spine. Its function is as follows. As a component of the outer core of AMPAR complex, may be involved in synaptic transmission in the central nervous system. In hippocampal neurons, in presynaptic terminals, plays an important role in the final steps of neurotransmitter release, possibly by regulating Ca(2+)-sensing. In the cerebellum, may inhibit SNARE complex formation and down-regulate short-term facilitation. This Homo sapiens (Human) protein is Proline-rich transmembrane protein 2 (PRRT2).